Reading from the N-terminus, the 124-residue chain is Fluoride-specific ion channel FluC (124 aa).

Transmembrane regions (helical) follow at residues 5–25 (VYIA…SGLV), 32–52 (SFPY…GLVM), 67–87 (FAIT…SFET), and 96–116 (LLIA…CTWI). Residues G75 and T78 each contribute to the Na(+) site.

The protein belongs to the fluoride channel Fluc/FEX (TC 1.A.43) family.

It localises to the cell inner membrane. It carries out the reaction fluoride(in) = fluoride(out). With respect to regulation, na(+) is not transported, but it plays an essential structural role and its presence is essential for fluoride channel function. Functionally, fluoride-specific ion channel. Important for reducing fluoride concentration in the cell, thus reducing its toxicity. The sequence is that of Fluoride-specific ion channel FluC from Geobacter sp. (strain M21).